A 165-amino-acid chain; its full sequence is Coatomer subunit zeta (165 aa).

It belongs to the adaptor complexes small subunit family. In terms of assembly, oligomeric complex that consists of at least the alpha, beta, beta', gamma, delta, epsilon and zeta subunits.

The protein localises to the cytoplasm. It localises to the golgi apparatus membrane. Its subcellular location is the cytoplasmic vesicle. It is found in the COPI-coated vesicle membrane. In terms of biological role, the coatomer is a cytosolic protein complex that binds to dilysine motifs and reversibly associates with Golgi non-clathrin-coated vesicles, which further mediate biosynthetic protein transport from the ER, via the Golgi up to the trans Golgi network. Coatomer complex is required for budding from Golgi membranes, and is essential for the retrograde Golgi-to-ER transport of dilysine-tagged proteins. The zeta subunit may be involved in regulating the coat assembly and, hence, the rate of biosynthetic protein transport due to its association-dissociation properties with the coatomer complex. This chain is Coatomer subunit zeta, found in Encephalitozoon cuniculi (strain GB-M1) (Microsporidian parasite).